The following is an 818-amino-acid chain: Protocadherin beta-1 (818 aa).

Residues 1–28 (MAGTRRKSLQNRQVGSLLIFLCISVGDA) form the signal peptide. Over 29-691 (TTIRYSVAEE…RKVNPSTKYL (663 aa)) the chain is Extracellular. Cadherin domains are found at residues 35-133 (VAEE…APVF), 138-242 (PLLK…VPQF), 243-347 (SRLV…PPEV), 348-452 (MVSS…PPIF), and 457-562 (YILT…RPMI). 4 N-linked (GlcNAc...) asparagine glycosylation sites follow: Asn169, Asn209, Asn257, and Asn419. N-linked (GlcNAc...) asparagine glycosylation is present at Asn568. The 96-residue stretch at 577 to 672 (VPRSAEAGYL…LVDGFSEPYL (96 aa)) folds into the Cadherin 6 domain. The helical transmembrane segment at 692-712 (VISLVILSFLFLLSVIVIFII) threads the bilayer. Residues 713–818 (HVYQKIKYRE…GHDQVSDDYM (106 aa)) lie on the Cytoplasmic side of the membrane. Positions 789 to 818 (MEAGSSLPPNSDRNKSQRLEGHDQVSDDYM) are disordered. Residues 800–818 (DRNKSQRLEGHDQVSDDYM) show a composition bias toward basic and acidic residues.

The protein resides in the cell membrane. Functionally, potential calcium-dependent cell-adhesion protein. May be involved in the establishment and maintenance of specific neuronal connections in the brain. In Homo sapiens (Human), this protein is Protocadherin beta-1 (PCDHB1).